Consider the following 300-residue polypeptide: tRNA uridine(34) hydroxylase (300 aa).

A Rhodanese domain is found at 128 to 222 (ADPEVIVVDT…YLEDVPQAQS (95 aa)). The Cysteine persulfide intermediate role is filled by cysteine 182.

The protein belongs to the TrhO family.

The enzyme catalyses uridine(34) in tRNA + AH2 + O2 = 5-hydroxyuridine(34) in tRNA + A + H2O. Functionally, catalyzes oxygen-dependent 5-hydroxyuridine (ho5U) modification at position 34 in tRNAs. In Deinococcus radiodurans (strain ATCC 13939 / DSM 20539 / JCM 16871 / CCUG 27074 / LMG 4051 / NBRC 15346 / NCIMB 9279 / VKM B-1422 / R1), this protein is tRNA uridine(34) hydroxylase.